A 535-amino-acid chain; its full sequence is Light-independent protochlorophyllide reductase subunit B (535 aa).

Aspartate 36 lines the [4Fe-4S] cluster pocket. Aspartate 292 serves as the catalytic Proton donor. 428–429 (GL) provides a ligand contact to substrate. The segment at 447-483 (SDDAAKAEPDQPVSNAHGHTESKTVSQGEPIASDEGG) is disordered.

The protein belongs to the ChlB/BchB/BchZ family. Protochlorophyllide reductase is composed of three subunits; BchL, BchN and BchB. Forms a heterotetramer of two BchB and two BchN subunits. It depends on [4Fe-4S] cluster as a cofactor.

The enzyme catalyses chlorophyllide a + oxidized 2[4Fe-4S]-[ferredoxin] + 2 ADP + 2 phosphate = protochlorophyllide a + reduced 2[4Fe-4S]-[ferredoxin] + 2 ATP + 2 H2O. It participates in porphyrin-containing compound metabolism; bacteriochlorophyll biosynthesis (light-independent). Its function is as follows. Component of the dark-operative protochlorophyllide reductase (DPOR) that uses Mg-ATP and reduced ferredoxin to reduce ring D of protochlorophyllide (Pchlide) to form chlorophyllide a (Chlide). This reaction is light-independent. The NB-protein (BchN-BchB) is the catalytic component of the complex. The sequence is that of Light-independent protochlorophyllide reductase subunit B from Chlorobium phaeobacteroides (strain DSM 266 / SMG 266 / 2430).